The sequence spans 432 residues: Queuine tRNA-ribosyltransferase accessory subunit 2 (432 aa).

Residues Cys-329, Cys-331, Cys-334, and His-360 each contribute to the Zn(2+) site. Residues 390 to 432 form a disordered region; it reads GQKSLPPYEPPKEEKLPMPAAQKAELMEPMEDLGEKQNKKQRA. The segment covering 422-432 has biased composition (basic and acidic residues); the sequence is LGEKQNKKQRA.

This sequence belongs to the queuine tRNA-ribosyltransferase family. QTRT2 subfamily. In terms of assembly, heterodimer of a catalytic subunit and an accessory subunit. It depends on Zn(2+) as a cofactor.

The protein resides in the cytoplasm. Functionally, non-catalytic subunit of the queuine tRNA-ribosyltransferase (TGT) that catalyzes the base-exchange of a guanine (G) residue with queuine (Q) at position 34 (anticodon wobble position) in tRNAs with GU(N) anticodons (tRNA-Asp, -Asn, -His and -Tyr), resulting in the hypermodified nucleoside queuosine (7-(((4,5-cis-dihydroxy-2-cyclopenten-1-yl)amino)methyl)-7-deazaguanosine). This chain is Queuine tRNA-ribosyltransferase accessory subunit 2, found in Anopheles gambiae (African malaria mosquito).